We begin with the raw amino-acid sequence, 156 residues long: ATP synthase subunit b (156 aa).

The helical transmembrane segment at 7 to 27 threads the bilayer; it reads LIGQTVAFIIFVWFCMKFVWP.

It belongs to the ATPase B chain family. As to quaternary structure, F-type ATPases have 2 components, F(1) - the catalytic core - and F(0) - the membrane proton channel. F(1) has five subunits: alpha(3), beta(3), gamma(1), delta(1), epsilon(1). F(0) has three main subunits: a(1), b(2) and c(10-14). The alpha and beta chains form an alternating ring which encloses part of the gamma chain. F(1) is attached to F(0) by a central stalk formed by the gamma and epsilon chains, while a peripheral stalk is formed by the delta and b chains.

The protein localises to the cell inner membrane. F(1)F(0) ATP synthase produces ATP from ADP in the presence of a proton or sodium gradient. F-type ATPases consist of two structural domains, F(1) containing the extramembraneous catalytic core and F(0) containing the membrane proton channel, linked together by a central stalk and a peripheral stalk. During catalysis, ATP synthesis in the catalytic domain of F(1) is coupled via a rotary mechanism of the central stalk subunits to proton translocation. In terms of biological role, component of the F(0) channel, it forms part of the peripheral stalk, linking F(1) to F(0). The protein is ATP synthase subunit b of Shewanella baltica (strain OS185).